Consider the following 356-residue polypeptide: Phosphoserine aminotransferase (356 aa).

Position 41 (arginine 41) interacts with L-glutamate. Pyridoxal 5'-phosphate is bound by residues 75–76, tryptophan 99, threonine 147, aspartate 166, and glutamine 189; that span reads AS. Lysine 190 is modified (N6-(pyridoxal phosphate)lysine). Residue 231-232 participates in pyridoxal 5'-phosphate binding; it reads NT.

This sequence belongs to the class-V pyridoxal-phosphate-dependent aminotransferase family. SerC subfamily. In terms of assembly, homodimer. The cofactor is pyridoxal 5'-phosphate.

Its subcellular location is the cytoplasm. It carries out the reaction O-phospho-L-serine + 2-oxoglutarate = 3-phosphooxypyruvate + L-glutamate. It catalyses the reaction 4-(phosphooxy)-L-threonine + 2-oxoglutarate = (R)-3-hydroxy-2-oxo-4-phosphooxybutanoate + L-glutamate. The protein operates within amino-acid biosynthesis; L-serine biosynthesis; L-serine from 3-phospho-D-glycerate: step 2/3. It participates in cofactor biosynthesis; pyridoxine 5'-phosphate biosynthesis; pyridoxine 5'-phosphate from D-erythrose 4-phosphate: step 3/5. In terms of biological role, catalyzes the reversible conversion of 3-phosphohydroxypyruvate to phosphoserine and of 3-hydroxy-2-oxo-4-phosphonooxybutanoate to phosphohydroxythreonine. This Phocaeicola vulgatus (strain ATCC 8482 / DSM 1447 / JCM 5826 / CCUG 4940 / NBRC 14291 / NCTC 11154) (Bacteroides vulgatus) protein is Phosphoserine aminotransferase.